We begin with the raw amino-acid sequence, 263 residues long: Putative TATA-binding protein pB263R (263 aa).

This sequence belongs to the asfivirus B263R family.

In terms of biological role, putative TATA-binding protein. The sequence is that of Putative TATA-binding protein pB263R from Ornithodoros (relapsing fever ticks).